A 60-amino-acid polypeptide reads, in one-letter code: Large ribosomal subunit protein uL30 (60 aa).

Belongs to the universal ribosomal protein uL30 family. As to quaternary structure, part of the 50S ribosomal subunit.

The polypeptide is Large ribosomal subunit protein uL30 (Nocardioides sp. (strain ATCC BAA-499 / JS614)).